The sequence spans 267 residues: ATP synthase subunit a (267 aa).

The next 5 helical transmembrane spans lie at tryptophan 38–tyrosine 58, isoleucine 98–isoleucine 118, asparagine 145–isoleucine 165, leucine 208–tryptophan 228, and alanine 238–valine 258.

This sequence belongs to the ATPase A chain family. F-type ATPases have 2 components, CF(1) - the catalytic core - and CF(0) - the membrane proton channel. CF(1) has five subunits: alpha(3), beta(3), gamma(1), delta(1), epsilon(1). CF(0) has three main subunits: a(1), b(2) and c(9-12). The alpha and beta chains form an alternating ring which encloses part of the gamma chain. CF(1) is attached to CF(0) by a central stalk formed by the gamma and epsilon chains, while a peripheral stalk is formed by the delta and b chains.

The protein localises to the cell inner membrane. In terms of biological role, key component of the proton channel; it plays a direct role in the translocation of protons across the membrane. This Psychromonas ingrahamii (strain DSM 17664 / CCUG 51855 / 37) protein is ATP synthase subunit a.